The following is an 89-amino-acid chain: UPF0147 protein Msed_2034 (89 aa).

It belongs to the UPF0147 family.

The protein is UPF0147 protein Msed_2034 of Metallosphaera sedula (strain ATCC 51363 / DSM 5348 / JCM 9185 / NBRC 15509 / TH2).